The following is a 281-amino-acid chain: Penicillin-insensitive murein endopeptidase (281 aa).

The signal sequence occupies residues 1–24; that stretch reads MKQGLIGVLALALGATLLSSAVWA. Cystine bridges form between C49–C270, C192–C240, and C221–C228. H115, H118, D125, and H216 together coordinate Zn(2+). Residues 230-271 form a disordered region; sequence EQSEPPIGDGCGAELTSWFQPKQPSSEAPEKTTPPPLPPSCQ. Residues 246–255 show a composition bias toward polar residues; the sequence is SWFQPKQPSS.

The protein belongs to the peptidase M74 family. As to quaternary structure, dimer. Requires Zn(2+) as cofactor.

The protein localises to the periplasm. In terms of biological role, murein endopeptidase that cleaves the D-alanyl-meso-2,6-diamino-pimelyl amide bond that connects peptidoglycan strands. Likely plays a role in the removal of murein from the sacculus. In Pectobacterium atrosepticum (strain SCRI 1043 / ATCC BAA-672) (Erwinia carotovora subsp. atroseptica), this protein is Penicillin-insensitive murein endopeptidase (mepA).